The chain runs to 306 residues: D-alanine--D-alanine ligase (306 aa).

The 200-residue stretch at 104–303 (KMLWKAFGLP…FEQLVVKILE (200 aa)) folds into the ATP-grasp domain. Residue 134 to 189 (VAKLGLPLMVKPSLEGSSVGLTKVKAVEELKSAVEYALKFDNTILIEEWLAGDELT) participates in ATP binding. Positions 257, 270, and 272 each coordinate Mg(2+).

It belongs to the D-alanine--D-alanine ligase family. It depends on Mg(2+) as a cofactor. Mn(2+) serves as cofactor.

It localises to the cytoplasm. The catalysed reaction is 2 D-alanine + ATP = D-alanyl-D-alanine + ADP + phosphate + H(+). It functions in the pathway cell wall biogenesis; peptidoglycan biosynthesis. Functionally, cell wall formation. This chain is D-alanine--D-alanine ligase, found in Haemophilus influenzae (strain 86-028NP).